The sequence spans 39 residues: uncharacterized protein (39 aa).

A helical transmembrane segment spans residues 18 to 38; the sequence is AIKVIALVVLITISAVVYLSV.

It localises to the membrane. This is an uncharacterized protein from Enterobacteriaceae (Bacteriophage Mu).